We begin with the raw amino-acid sequence, 455 residues long: Ribulose bisphosphate carboxylase large chain (455 aa).

Lysine 5 bears the N6,N6,N6-trimethyllysine mark. Substrate is bound by residues asparagine 114 and threonine 164. Catalysis depends on lysine 166, which acts as the Proton acceptor. Lysine 168 provides a ligand contact to substrate. Mg(2+)-binding residues include lysine 192, aspartate 194, and glutamate 195. An N6-carboxylysine modification is found at lysine 192. Residue histidine 285 is the Proton acceptor of the active site. Substrate-binding residues include arginine 286, histidine 318, and serine 370.

The protein belongs to the RuBisCO large chain family. Type I subfamily. Heterohexadecamer of 8 large chains and 8 small chains; disulfide-linked. The disulfide link is formed within the large subunit homodimers. Mg(2+) serves as cofactor. In terms of processing, the disulfide bond which can form in the large chain dimeric partners within the hexadecamer appears to be associated with oxidative stress and protein turnover.

The protein resides in the plastid. Its subcellular location is the chloroplast. It catalyses the reaction 2 (2R)-3-phosphoglycerate + 2 H(+) = D-ribulose 1,5-bisphosphate + CO2 + H2O. The enzyme catalyses D-ribulose 1,5-bisphosphate + O2 = 2-phosphoglycolate + (2R)-3-phosphoglycerate + 2 H(+). Its function is as follows. RuBisCO catalyzes two reactions: the carboxylation of D-ribulose 1,5-bisphosphate, the primary event in carbon dioxide fixation, as well as the oxidative fragmentation of the pentose substrate in the photorespiration process. Both reactions occur simultaneously and in competition at the same active site. This chain is Ribulose bisphosphate carboxylase large chain, found in Vachellia farnesiana (Sweet acacia).